The chain runs to 568 residues: 2-succinyl-5-enolpyruvyl-6-hydroxy-3-cyclohexene-1-carboxylate synthase (568 aa).

Belongs to the TPP enzyme family. MenD subfamily. In terms of assembly, homodimer. The cofactor is Mg(2+). Mn(2+) is required as a cofactor. It depends on thiamine diphosphate as a cofactor.

The enzyme catalyses isochorismate + 2-oxoglutarate + H(+) = 5-enolpyruvoyl-6-hydroxy-2-succinyl-cyclohex-3-ene-1-carboxylate + CO2. It participates in quinol/quinone metabolism; 1,4-dihydroxy-2-naphthoate biosynthesis; 1,4-dihydroxy-2-naphthoate from chorismate: step 2/7. The protein operates within quinol/quinone metabolism; menaquinone biosynthesis. Functionally, catalyzes the thiamine diphosphate-dependent decarboxylation of 2-oxoglutarate and the subsequent addition of the resulting succinic semialdehyde-thiamine pyrophosphate anion to isochorismate to yield 2-succinyl-5-enolpyruvyl-6-hydroxy-3-cyclohexene-1-carboxylate (SEPHCHC). This Haemophilus influenzae (strain PittEE) protein is 2-succinyl-5-enolpyruvyl-6-hydroxy-3-cyclohexene-1-carboxylate synthase.